Reading from the N-terminus, the 269-residue chain is Putative ankyrin repeat protein L23 (269 aa).

ANK repeat units lie at residues 118–147, 148–177, 179–207, 208–237, and 238–267; these read EDDYAVKWASKNGHLKVVEYLVSLGADIKS, DGDYAVRWASENGHIDVVKYLVSQNADIRA, NDYAVKWASSNGHLEVVKYLVSQGANIRE, QNDYAIRLASQYGHLEVVKYLISLGADIRA, and DNDCAVRLASENGHIEIVNYLISQGADIRA.

The polypeptide is Putative ankyrin repeat protein L23 (Acanthamoeba polyphaga (Amoeba)).